A 571-amino-acid chain; its full sequence is Urease subunit alpha (571 aa).

The Urease domain maps to Gly-129–Phe-571. His-134, His-136, and Lys-217 together coordinate Ni(2+). N6-carboxylysine is present on Lys-217. His-219 contacts substrate. Ni(2+)-binding residues include His-246 and His-272. The Proton donor role is filled by His-320. Residue Asp-360 participates in Ni(2+) binding.

Belongs to the metallo-dependent hydrolases superfamily. Urease alpha subunit family. In terms of assembly, heterotrimer of UreA (gamma), UreB (beta) and UreC (alpha) subunits. Three heterotrimers associate to form the active enzyme. It depends on Ni cation as a cofactor. Post-translationally, carboxylation allows a single lysine to coordinate two nickel ions.

Its subcellular location is the cytoplasm. It catalyses the reaction urea + 2 H2O + H(+) = hydrogencarbonate + 2 NH4(+). The protein operates within nitrogen metabolism; urea degradation; CO(2) and NH(3) from urea (urease route): step 1/1. The protein is Urease subunit alpha of Cupriavidus necator (strain ATCC 17699 / DSM 428 / KCTC 22496 / NCIMB 10442 / H16 / Stanier 337) (Ralstonia eutropha).